A 179-amino-acid polypeptide reads, in one-letter code: Serglycin (179 aa).

The signal sequence occupies residues 1 to 26 (MRQVPVGTRLVLALAFVLVWGSSVQG). A propeptide spans 27-75 (YPARRARYQWVRCKPDGIFANCIEEKGPRFDLIAEESNVGPPMTDPVLM) (activation peptide). Cys39 and Cys48 are disulfide-bonded. The interval 86–145 (SDDYSGSGSGSGSGSGSGSGSGSGSGSGSGSGSGSGSGSGSGSGSGSGSGSGSLADMEWE) is disordered. O-linked (Xyl...) (glycosaminoglycan) serine glycosylation is found at Ser90 and Ser92. A run of 24 repeats spans residues 90–91 (SG), 92–93 (SG), 94–95 (SG), 96–97 (SG), 98–99 (SG), 100–101 (SG), 102–103 (SG), 104–105 (SG), 106–107 (SG), 108–109 (SG), 110–111 (SG), 112–113 (SG), 114–115 (SG), 116–117 (SG), 118–119 (SG), 120–121 (SG), 122–123 (SG), 124–125 (SG), 126–127 (SG), 128–129 (SG), 130–131 (SG), 132–133 (SG), 134–135 (SG), and 136–137 (SG). Positions 90–137 (SGSGSGSGSGSGSGSGSGSGSGSGSGSGSGSGSGSGSGSGSGSGSGSG) are 24 X 2 AA tandem repeats of S-G. Residues 92-136 (SGSGSGSGSGSGSGSGSGSGSGSGSGSGSGSGSGSGSGSGSGSGS) show a composition bias toward gly residues. O-linked (Xyl...) (glycosaminoglycan) serine glycosylation is found at Ser96, Ser98, Ser100, Ser102, Ser104, and Ser106.

This sequence belongs to the serglycin family. Binds to activated CD44 and to GZMB. In terms of processing, O-glycosylated; contains chondroitin sulfate and heparan sulfate.

The protein localises to the cytoplasmic granule. The protein resides in the cytolytic granule. It is found in the secreted. It localises to the extracellular space. Its subcellular location is the golgi apparatus. Functionally, plays a role in formation of mast cell secretory granules and mediates storage of various compounds in secretory vesicles. Required for storage of some proteases in both connective tissue and mucosal mast cells and for storage of granzyme B in T-lymphocytes. Plays a role in localizing neutrophil elastase in azurophil granules of neutrophils. Mediates processing of MMP2. Plays a role in cytotoxic cell granule-mediated apoptosis by forming a complex with granzyme B which is delivered to cells by perforin to induce apoptosis. Regulates the secretion of TNF-alpha and may also regulate protease secretion. Inhibits bone mineralization. This chain is Serglycin (Srgn), found in Rattus norvegicus (Rat).